We begin with the raw amino-acid sequence, 162 residues long: Lymphocyte antigen 86 (162 aa).

Residues 1 to 19 form the signal peptide; sequence MNGVAAALLVWILTSPSSS. Cystine bridges form between cysteine 33-cysteine 58, cysteine 45-cysteine 154, and cysteine 102-cysteine 112. N-linked (GlcNAc...) asparagine glycosylation is present at asparagine 96. An N-linked (GlcNAc...) asparagine glycan is attached at asparagine 156.

M-shaped tetramer of two CD180-LY86 heterodimers. In terms of tissue distribution, highly expressed in spleen, liver, brain and thymus, and at lower levels in kidney.

It localises to the secreted. The protein localises to the extracellular space. Its function is as follows. May cooperate with CD180 and TLR4 to mediate the innate immune response to bacterial lipopolysaccharide (LPS) and cytokine production. Important for efficient CD180 cell surface expression. The protein is Lymphocyte antigen 86 (Ly86) of Mus musculus (Mouse).